We begin with the raw amino-acid sequence, 373 residues long: 3 beta-hydroxysteroid dehydrogenase/Delta 5--&gt;4-isomerase type 4 (373 aa).

The Proton acceptor role is filled by Y155. Residue K159 participates in NAD(+) binding. Residues 288–308 (LPLLYWLAFLLEIVSFFLHPV) form a helical membrane-spanning segment. The residue at position 350 (K350) is an N6-acetyllysine.

The protein belongs to the 3-beta-HSD family. Skin, placenta, also detectable in ovary and adrenal gland.

It localises to the endoplasmic reticulum membrane. It is found in the mitochondrion membrane. The catalysed reaction is a 3beta-hydroxy-Delta(5)-steroid + NAD(+) = a 3-oxo-Delta(5)-steroid + NADH + H(+). The enzyme catalyses a 3-oxo-Delta(5)-steroid = a 3-oxo-Delta(4)-steroid. It participates in lipid metabolism; steroid biosynthesis. Functionally, 3-beta-HSD is a bifunctional enzyme, that catalyzes the oxidative conversion of Delta(5)-ene-3-beta-hydroxy steroid, and the oxidative conversion of ketosteroids. The 3-beta-HSD enzymatic system plays a crucial role in the biosynthesis of all classes of hormonal steroids. In Rattus norvegicus (Rat), this protein is 3 beta-hydroxysteroid dehydrogenase/Delta 5--&gt;4-isomerase type 4 (Hsd3b6).